The primary structure comprises 364 residues: Chorismate synthase (364 aa).

Positions 41–60 are disordered; that stretch reads MQHDLDRRRPGTSRYTTARR. Residues R48 and R54 each contribute to the NADP(+) site. FMN is bound by residues 125 to 127, 238 to 239, G278, 293 to 297, and R319; these read RSS, NA, and KPTSS.

The protein belongs to the chorismate synthase family. In terms of assembly, homotetramer. The cofactor is FMNH2.

It catalyses the reaction 5-O-(1-carboxyvinyl)-3-phosphoshikimate = chorismate + phosphate. It participates in metabolic intermediate biosynthesis; chorismate biosynthesis; chorismate from D-erythrose 4-phosphate and phosphoenolpyruvate: step 7/7. Its function is as follows. Catalyzes the anti-1,4-elimination of the C-3 phosphate and the C-6 proR hydrogen from 5-enolpyruvylshikimate-3-phosphate (EPSP) to yield chorismate, which is the branch point compound that serves as the starting substrate for the three terminal pathways of aromatic amino acid biosynthesis. This reaction introduces a second double bond into the aromatic ring system. The polypeptide is Chorismate synthase (Shewanella sp. (strain MR-4)).